The primary structure comprises 91 residues: DNA-directed RNA polymerase subunit omega (91 aa).

It belongs to the RNA polymerase subunit omega family. In terms of assembly, the RNAP catalytic core consists of 2 alpha, 1 beta, 1 beta' and 1 omega subunit. When a sigma factor is associated with the core the holoenzyme is formed, which can initiate transcription.

The enzyme catalyses RNA(n) + a ribonucleoside 5'-triphosphate = RNA(n+1) + diphosphate. In terms of biological role, promotes RNA polymerase assembly. Latches the N- and C-terminal regions of the beta' subunit thereby facilitating its interaction with the beta and alpha subunits. The chain is DNA-directed RNA polymerase subunit omega from Pectobacterium carotovorum subsp. carotovorum (strain PC1).